A 211-amino-acid chain; its full sequence is Large ribosomal subunit protein bL25 (211 aa).

The segment at 185-211 is disordered; sequence ESTTPAATEGEETEAAAAAPEPAAEDK. The segment covering 199–211 has biased composition (low complexity); sequence AAAAAPEPAAEDK.

Belongs to the bacterial ribosomal protein bL25 family. CTC subfamily. Part of the 50S ribosomal subunit; part of the 5S rRNA/L5/L18/L25 subcomplex. Contacts the 5S rRNA. Binds to the 5S rRNA independently of L5 and L18.

Functionally, this is one of the proteins that binds to the 5S RNA in the ribosome where it forms part of the central protuberance. In Treponema denticola (strain ATCC 35405 / DSM 14222 / CIP 103919 / JCM 8153 / KCTC 15104), this protein is Large ribosomal subunit protein bL25.